A 465-amino-acid polypeptide reads, in one-letter code: Probable citrate synthase, mitochondrial (465 aa).

Residues H303, H349, and D404 contribute to the active site.

Belongs to the citrate synthase family. In terms of assembly, homodimer.

It localises to the mitochondrion matrix. The enzyme catalyses oxaloacetate + acetyl-CoA + H2O = citrate + CoA + H(+). It functions in the pathway carbohydrate metabolism; tricarboxylic acid cycle; isocitrate from oxaloacetate: step 1/2. The protein is Probable citrate synthase, mitochondrial of Glossina morsitans morsitans (Savannah tsetse fly).